Reading from the N-terminus, the 201-residue chain is Small ribosomal subunit protein uS4c (201 aa).

Positions 17–36 are disordered; that stretch reads ALPGLTRKTPKSGSNLKKKF. The 69-residue stretch at 89–157 folds into the S4 RNA-binding domain; the sequence is MRLDNILFRL…VQNYIASSDP (69 aa).

This sequence belongs to the universal ribosomal protein uS4 family. In terms of assembly, part of the 30S ribosomal subunit. Contacts protein S5. The interaction surface between S4 and S5 is involved in control of translational fidelity.

The protein localises to the plastid. It localises to the chloroplast. Functionally, one of the primary rRNA binding proteins, it binds directly to 16S rRNA where it nucleates assembly of the body of the 30S subunit. In terms of biological role, with S5 and S12 plays an important role in translational accuracy. The sequence is that of Small ribosomal subunit protein uS4c (rps4) from Agrostis stolonifera (Creeping bentgrass).